The following is a 398-amino-acid chain: MAKLTVKDVDLKGKKVLVRVDFNVPLKDGVITNDNRITAALPTIKYIIEQGGRAILFSHLGRVKEEADKEGKSLAPVAADLAAKLGQDVVFPGVTRGAKLEEAINALEDGQVLLVENTRFEDVDGKKESKNDEELGKYWASLGDGIFVNDAFGTAHRAHASNVGISANVEKAVAGFLLENEIAYIQEAVETPERPFVAILGGSKVSDKIGVIENLLEKADKVLIGGGMTYTFYKAQGIEIGNSLVEEDKLDVAKDLLEKSNGKLILPVDSKEANAFAGYTEVRDTEGEAVSEGFLGLDIGPKSIAKFDEALTGAKTVVWNGPMGVFENPDFQAGTIGVMDAIVKQPGVKSIIGGGDSAAAAINLGRADKFSWISTGGGASMELLEGKVLPGLAALTEK.

Substrate contacts are provided by residues 21 to 23 (DFN), arginine 36, 59 to 62 (HLGR), arginine 119, and arginine 157. ATP is bound by residues lysine 208, glycine 296, glutamate 327, and 354 to 357 (GGDS).

Belongs to the phosphoglycerate kinase family. As to quaternary structure, monomer.

The protein resides in the cytoplasm. It catalyses the reaction (2R)-3-phosphoglycerate + ATP = (2R)-3-phospho-glyceroyl phosphate + ADP. It functions in the pathway carbohydrate degradation; glycolysis; pyruvate from D-glyceraldehyde 3-phosphate: step 2/5. The polypeptide is Phosphoglycerate kinase (Streptococcus agalactiae serotype Ia (strain ATCC 27591 / A909 / CDC SS700)).